The chain runs to 169 residues: Neudesin (169 aa).

The signal sequence occupies residues 1–28 (MAGPAPGRRLVALALIVALAVGLPTAGA). The 86-residue stretch at 41 to 126 (VRLFTEEELA…EELESLDDVF (86 aa)) folds into the Cytochrome b5 heme-binding domain. Lysine 133 carries the post-translational modification N6-acetyllysine. The tract at residues 148-169 (DGSPNLDFKPEDQPHFDIKDEF) is disordered. Positions 155 to 169 (FKPEDQPHFDIKDEF) are enriched in basic and acidic residues.

Belongs to the cytochrome b5 family. MAPR subfamily. Interacts with PINK1 and PARK7.

The protein localises to the secreted. The protein resides in the extracellular space. It is found in the mitochondrion. It localises to the endoplasmic reticulum. Its function is as follows. Acts as a neurotrophic factor in postnatal mature neurons enhancing neuronal survival. Promotes cell proliferation and neurogenesis in undifferentiated neural progenitor cells at the embryonic stage and inhibits differentiation of astrocytes. Its neurotrophic activity is exerted via MAPK1/ERK2, MAPK3/ERK1 and AKT1/AKT pathways. Neurotrophic activity is enhanced by binding to heme. Also acts as an anorexigenic neurotrophic factor that contributes to energy balance. The sequence is that of Neudesin (NENF) from Bos taurus (Bovine).